The chain runs to 310 residues: N-acetyl-gamma-glutamyl-phosphate reductase (310 aa).

The active site involves Cys-117.

Belongs to the NAGSA dehydrogenase family. Type 2 subfamily.

It localises to the cytoplasm. The catalysed reaction is N-acetyl-L-glutamate 5-semialdehyde + phosphate + NADP(+) = N-acetyl-L-glutamyl 5-phosphate + NADPH + H(+). The protein operates within amino-acid biosynthesis; L-arginine biosynthesis; N(2)-acetyl-L-ornithine from L-glutamate: step 3/4. Its function is as follows. Catalyzes the NADPH-dependent reduction of N-acetyl-5-glutamyl phosphate to yield N-acetyl-L-glutamate 5-semialdehyde. The protein is N-acetyl-gamma-glutamyl-phosphate reductase of Brucella abortus (strain S19).